Here is a 345-residue protein sequence, read N- to C-terminus: Src kinase-associated phosphoprotein 1 (345 aa).

The region spanning 109 to 212 (KIFKQGYLER…WVEQIQFLVK (104 aa)) is the PH domain. Residues 226–274 (ETYDDIESTESSPVVGLTNDSENSLQEDDVYESIPGDEETEESEDENYE) form a disordered region. Residues 250 to 272 (LQEDDVYESIPGDEETEESEDEN) are compositionally biased toward acidic residues. Positions 283–344 (FYGDYYQGLW…PKDYLTLAFD (62 aa)) constitute an SH3 domain.

Belongs to the SKAP family. In terms of assembly, homodimer. In terms of processing, phosphorylated on tyrosines.

The protein localises to the cytoplasm. The protein resides in the nucleus. Its subcellular location is the cell membrane. In terms of biological role, positively regulates T-cell receptor signaling. Required for optimal conjugation between T-cells and antigen-presenting cells. This Xenopus tropicalis (Western clawed frog) protein is Src kinase-associated phosphoprotein 1 (skap1).